The primary structure comprises 761 residues: BMP/retinoic acid-inducible neural-specific protein 1 (761 aa).

The first 22 residues, 1-22 (MNWRLVEFLYLLFIWDHILVQP), serve as a signal peptide directing secretion. The MACPF domain occupies 68–251 (RYKIYREFAR…FVQSALSYIM (184 aa)). N-linked (GlcNAc...) asparagine glycans are attached at residues Asn-156, Asn-433, Asn-443, Asn-553, Asn-599, Asn-631, and Asn-677.

This sequence belongs to the BRINP family.

It is found in the cytoplasm. Plays a role in neurogenesis and brain development. May suppress cell cycle progression in postmitotic neurons by inhibiting G1/S transition. This Gallus gallus (Chicken) protein is BMP/retinoic acid-inducible neural-specific protein 1 (BRINP1).